The primary structure comprises 257 residues: Melatonin receptor type 1A (257 aa).

Residues 5–22 (LASIVNDGWSLSSLHCQL) are Extracellular-facing. An intrachain disulfide couples C20 to C97. A helical membrane pass occupies residues 23–43 (SGFLMGLSVIGSVFNITGIAI). The Cytoplasmic portion of the chain corresponds to 44-64 (NRYCCICHSLRYNKLYSSTNS). The chain crosses the membrane as a helical span at residues 65 to 85 (LCYVFLIWMLTLVAIVPNLCV). Over 86 to 107 (GTLQYDPRIYSCTFTQSVSSAY) the chain is Extracellular. The chain crosses the membrane as a helical span at residues 108 to 128 (TIAVVVFHFIVPMLVVIFCYL). At 129–160 (RIWALVLQVRWRVKPDNKPKLKPQDFRNFVTM) the chain is on the cytoplasmic side. Residues 161–181 (FVVFVLFAICWAPLNFIGLVV) form a helical membrane-spanning segment. Topologically, residues 182 to 194 (ASEPASMAPRIPE) are extracellular. Residues 195–215 (WLFVASYYMGYFNSCLNAIIY) traverse the membrane as a helical segment. At 216-257 (GLLNQNFRQEYRKIIVSLCTTKMFFVDSSNHVAHRIKRKPSP) the chain is on the cytoplasmic side.

This sequence belongs to the G-protein coupled receptor 1 family.

It localises to the cell membrane. High affinity receptor for melatonin. Likely to mediate the reproductive and circadian actions of melatonin. The activity of this receptor is mediated by pertussis toxin sensitive G proteins that inhibit adenylate cyclase activity. Possibly involved in sleep induction, by melatonin activation of the potassium channel KCNMA1/BK and the dissociation of G-beta and G-gamma subunits, thereby decreasing synaptic transmission. This is Melatonin receptor type 1A (MTNR1A) from Bos taurus (Bovine).